The following is a 286-amino-acid chain: MAENTMWHETLHDQFGQYFAVDNVLYHEKTDHQDLIIFENAAFGRVMALDGVVQTTERDEFIYHEMMTHVPLLAHGHAKHVLIIGGGDGAMLREVTRHKNVETITMVEIDAGVVSFCRQYLPNHNAGSYDDPRFTLVIDDGVNFVNQTHQTFDVIISDCTDPIGPGESLFTSAFYEGCKRCLNPGGIFVAQNGVCFLQQDEALDSHRKLSHYFSDVSFYQAAIPTYYGGIMTFAWATDNDAIRHLSSETIQARFHAAGLKCRYYNPAIHAAAFALPQYLHDALSAQ.

The PABS domain occupies 5–238; sequence TMWHETLHDQ…GIMTFAWATD (234 aa). Glutamine 33 is an S-methyl-5'-thioadenosine binding site. Residues histidine 64 and aspartate 88 each coordinate spermidine. S-methyl-5'-thioadenosine-binding positions include glutamate 108 and 140-141; that span reads DG. Aspartate 158 (proton acceptor) is an active-site residue. 158–161 is a spermidine binding site; that stretch reads DCTD. Position 165 (proline 165) interacts with S-methyl-5'-thioadenosine.

It belongs to the spermidine/spermine synthase family. As to quaternary structure, homodimer or homotetramer.

Its subcellular location is the cytoplasm. The enzyme catalyses S-adenosyl 3-(methylsulfanyl)propylamine + putrescine = S-methyl-5'-thioadenosine + spermidine + H(+). The protein operates within amine and polyamine biosynthesis; spermidine biosynthesis; spermidine from putrescine: step 1/1. Functionally, catalyzes the irreversible transfer of a propylamine group from the amino donor S-adenosylmethioninamine (decarboxy-AdoMet) to putrescine (1,4-diaminobutane) to yield spermidine. The protein is Polyamine aminopropyltransferase of Salmonella arizonae (strain ATCC BAA-731 / CDC346-86 / RSK2980).